The chain runs to 278 residues: Large ribosomal subunit protein uL2 (278 aa).

The disordered stretch occupies residues 223–278 (RGSAMNPNDHPHGGGEGKAPVGRKAPMTPWGKKALGVKTRNKKKASTKLIVRRRTK). The segment covering 261–278 (TRNKKKASTKLIVRRRTK) has biased composition (basic residues).

It belongs to the universal ribosomal protein uL2 family. As to quaternary structure, part of the 50S ribosomal subunit. Forms a bridge to the 30S subunit in the 70S ribosome.

Its function is as follows. One of the primary rRNA binding proteins. Required for association of the 30S and 50S subunits to form the 70S ribosome, for tRNA binding and peptide bond formation. It has been suggested to have peptidyltransferase activity; this is somewhat controversial. Makes several contacts with the 16S rRNA in the 70S ribosome. The polypeptide is Large ribosomal subunit protein uL2 (Spiroplasma kunkelii).